The following is a 190-amino-acid chain: Probable chemoreceptor glutamine deamidase CheD (190 aa).

This sequence belongs to the CheD family.

It carries out the reaction L-glutaminyl-[protein] + H2O = L-glutamyl-[protein] + NH4(+). Its function is as follows. Probably deamidates glutamine residues to glutamate on methyl-accepting chemotaxis receptors (MCPs), playing an important role in chemotaxis. The sequence is that of Probable chemoreceptor glutamine deamidase CheD from Acidiphilium cryptum (strain JF-5).